The chain runs to 317 residues: Bile salt hydrolase/transferase (317 aa).

The active-site Nucleophile; acyl-thioester intermediate is the Cys-2. Residues Cys-2 and Arg-18 each contribute to the deoxycholate site. Residue Asn-82 coordinates taurine.

The protein belongs to the peptidase C59 family. In terms of assembly, homotetramer. The tetramer consists of a dimer of dimers.

The catalysed reaction is glycocholate + H2O = cholate + glycine. The enzyme catalyses glycodeoxycholate + H2O = deoxycholate + glycine. It carries out the reaction chenodeoxycholate + glycine = glycochenodeoxycholate + H2O. It catalyses the reaction cholate + taurine = taurocholate + H2O. The catalysed reaction is taurodeoxycholate + H2O = deoxycholate + taurine. The enzyme catalyses taurochenodeoxycholate + H2O = chenodeoxycholate + taurine. It carries out the reaction an L-alpha-amino acid + cholate = an N-choloyl-L-alpha-amino acid + H2O. It catalyses the reaction an L-alpha-amino acid + taurocholate = an N-choloyl-L-alpha-amino acid + taurine. The catalysed reaction is cholate + L-alanine = L-alanocholate + H2O. The enzyme catalyses taurocholate + L-alanine = L-alanocholate + taurine. It carries out the reaction cholate + L-serine = L-serocholate + H2O. It catalyses the reaction taurocholate + L-serine = L-serocholate + taurine. The catalysed reaction is cholate + L-histidine = L-histidocholate + H2O. The enzyme catalyses taurocholate + L-histidine = L-histidocholate + taurine. It functions in the pathway lipid metabolism; bile acid biosynthesis. Its function is as follows. Possesses dual functions in bile acid metabolism. Acts as a bile salt hydrolase that catalyzes the deconjugation of glycine- and taurine-linked bile salts, which occurs naturally in the intestines of humans, releasing amino acid residues and deconjugated bile salts (bile acids). Can hydrolyze the amide bond in all six major human conjugated bile salts, namely glycocholate (GCA), glycodeoxycholate (GDCA), glycochenodeoxycholate (GCDCA), taurocholate (TCA), taurodeoxycholate (TDCA) and taurochenodeoxycholate (TCDCA). Shows a slight preference for glycine-conjugated bile acids as substrates. Also acts as an amine N-acyltransferase that conjugates a wide variety of amino acids to conjugated and non-conjugated bile acids, thus producing bacterial bile acid amidates (BBAAs) - also named microbially conjugated bile acids (MCBAs) - in the gastrointestinal tract. These BBAAs may facilitate communication between the microbiota and host through the activation of human ligand-activated transcription factors. This is Bile salt hydrolase/transferase from Bifidobacterium longum subsp. longum (strain ATCC 15707 / DSM 20219 / JCM 1217 / NCTC 11818 / E194b).